We begin with the raw amino-acid sequence, 40 residues long: Photosystem I reaction center subunit IX (40 aa).

A helical transmembrane segment spans residues 4–24 (FFESWPMAAVLWVWLTAGIIV).

This sequence belongs to the PsaJ family.

Its subcellular location is the cellular thylakoid membrane. In terms of biological role, may help in the organization of the PsaE and PsaF subunits. This Prochlorococcus marinus (strain MIT 9313) protein is Photosystem I reaction center subunit IX.